The sequence spans 133 residues: Major seminal plasma glycoprotein PSP-I (133 aa).

An N-terminal signal peptide occupies residues 1 to 24 (MKLGSAIPWALLFSTATLISTGWG). A disulfide bond links cysteine 30 and cysteine 51. The 101-residue stretch at 30–130 (CGGRLTDDYG…SPYEIIFLRD (101 aa)) folds into the CUB domain. Asparagine 71 is a glycosylation site (N-linked (GlcNAc...) (complex) asparagine). An intrachain disulfide couples cysteine 74 to cysteine 95.

In terms of assembly, monomer or heterodimer with PSP-II (depending on the type of glycosylation of PSP-I). Seminal plasma or sperm.

Its subcellular location is the secreted. Functionally, not yet identified, major porcine seminal plasma protein. Can bind soybean trypsin inhibitor after deglycosylation. The chain is Major seminal plasma glycoprotein PSP-I from Sus scrofa (Pig).